We begin with the raw amino-acid sequence, 451 residues long: Tubulin gamma-2 chain (451 aa).

Serine 131 carries the phosphoserine; by BRSK1 modification. 142 to 148 contributes to the GTP binding site; it reads AGGTGSG.

This sequence belongs to the tubulin family. In terms of assembly, component of the gamma-tubulin ring complex (gTuRC) consisting of TUBGCP2, TUBGCP3, TUBGCP4, TUBGCP5 and TUBGCP6 and gamma-tubulin TUBG1 or TUBG2. TUBGCP2, TUBGCP3, TUBGCP4, TUBGCP5 and TUBGCP6 assemble in a 5:5:2:1:1 stoichiometry; each is associated with a gamma-tubulin, thereby arranging 14 gamma-tubulins in a helical manner. Gamma-tubulin at the first position is blocked by TUBGCP3 at the last position, allowing 13 protafilaments to grow into a microtubule. Interacts with alpha-beta tubulin heterodimers; the interaction allows microtubules to nucleate from the gTuRC. Phosphorylation at Ser-131 by BRSK1 regulates centrosome duplication, possibly by mediating relocation of gamma-tubulin and its associated proteins from the cytoplasm to the centrosome.

The protein localises to the cytoplasm. It localises to the cytoskeleton. The protein resides in the microtubule organizing center. It is found in the centrosome. Functionally, tubulin is the major constituent of microtubules, protein filaments consisting of alpha- and beta-tubulin heterodimers. Gamma-tubulin is a key component of the gamma-tubulin ring complex (gTuRC) which mediates microtubule nucleation. The gTuRC regulates the minus-end nucleation of alpha-beta tubulin heterodimers that grow into microtubule protafilaments, a critical step in centrosome duplication and spindle formation. The sequence is that of Tubulin gamma-2 chain (Tubg2) from Mus musculus (Mouse).